A 258-amino-acid polypeptide reads, in one-letter code: Tryptophan synthase alpha chain (258 aa).

Residues Glu52 and Asp63 each act as proton acceptor in the active site.

It belongs to the TrpA family. Tetramer of two alpha and two beta chains.

It catalyses the reaction (1S,2R)-1-C-(indol-3-yl)glycerol 3-phosphate + L-serine = D-glyceraldehyde 3-phosphate + L-tryptophan + H2O. The protein operates within amino-acid biosynthesis; L-tryptophan biosynthesis; L-tryptophan from chorismate: step 5/5. Functionally, the alpha subunit is responsible for the aldol cleavage of indoleglycerol phosphate to indole and glyceraldehyde 3-phosphate. In Streptococcus pneumoniae (strain 70585), this protein is Tryptophan synthase alpha chain.